Here is a 643-residue protein sequence, read N- to C-terminus: Phosphomethylpyrimidine synthase (643 aa).

Substrate is bound by residues Asn-248, Met-277, Tyr-306, His-342, 362–364 (SRG), 403–406 (DGLR), and Glu-442. His-446 contacts Zn(2+). Tyr-469 contacts substrate. A Zn(2+)-binding site is contributed by His-510. Positions 590, 593, and 598 each coordinate [4Fe-4S] cluster.

It belongs to the ThiC family. As to quaternary structure, homodimer. The cofactor is [4Fe-4S] cluster.

It carries out the reaction 5-amino-1-(5-phospho-beta-D-ribosyl)imidazole + S-adenosyl-L-methionine = 4-amino-2-methyl-5-(phosphooxymethyl)pyrimidine + CO + 5'-deoxyadenosine + formate + L-methionine + 3 H(+). It functions in the pathway cofactor biosynthesis; thiamine diphosphate biosynthesis. Its function is as follows. Catalyzes the synthesis of the hydroxymethylpyrimidine phosphate (HMP-P) moiety of thiamine from aminoimidazole ribotide (AIR) in a radical S-adenosyl-L-methionine (SAM)-dependent reaction. This is Phosphomethylpyrimidine synthase from Burkholderia cenocepacia (strain HI2424).